The chain runs to 2626 residues: Unconventional myosin-IXa (2626 aa).

Residues 14 to 112 (NEHTLRIYPG…YRFLLREKNL (99 aa)) enclose the Ras-associating domain. In terms of domain architecture, Myosin motor spans 146 to 1017 (KDFDDLCSLP…ERQHLQDLLH (872 aa)). The helical transmembrane segment at 175–195 (IYTYVGSILIAINPFKFLPIY) threads the bilayer. 239–246 (GESGSGKT) contacts ATP. A Phosphoserine modification is found at serine 755. Positions 908–919 (QAEPYFVKCIRS) are actin-binding. IQ domains lie at 1021 to 1041 (LRRI…QQFL), 1043 to 1072 (LRQA…EKDA), 1075 to 1104 (MASA…AAVI), 1116 to 1145 (RHRA…KIIL), and 1139 to 1168 (QRNK…ERLK). The tract at residues 1022 to 1163 (RRIILLQRWF…RARQRYKALK (142 aa)) is neck or regulatory domain. The tail stretch occupies residues 1164–2589 (EERLKETKLE…LKNVKNSPQK (1426 aa)). A compositionally biased stretch (basic and acidic residues) spans 1221-1240 (RESSMDFSKESPDKQQERGR). The tract at residues 1221–1276 (RESSMDFSKESPDKQQERGRSQSGTDLQGDVIVRQRPKSLEDLHQKKVGRAKRESR) is disordered. Serine 1243 carries the phosphoserine modification. A Phosphothreonine modification is found at threonine 1245. Serine 1259 carries the phosphoserine modification. Residues 1265 to 1292 (QKKVGRAKRESRRMRELEQAIFSLELLK) are a coiled coil. The segment covering 1266-1276 (KKVGRAKRESR) has biased composition (basic residues). A phosphoserine mark is found at serine 1300 and serine 1318. Residues 1360–1375 (PSTFTNPKFDSQNNAL) are compositionally biased toward polar residues. The interval 1360–1397 (PSTFTNPKFDSQNNALSASSETSSTFSGKGASSDSEHL) is disordered. Low complexity predominate over residues 1376–1386 (SASSETSSTFS). Residues 1493-1540 (TVLKKLEKLNIEKEKRQKQLQQQNEKEMMEQIRQQTDILEKERKAFKT) adopt a coiled-coil conformation. Disordered stretches follow at residues 1562-1602 (VERP…PPKD), 1618-1673 (SRTV…SRPI), 1689-1726 (GNPQ…RMAR), 1765-1784 (SELG…SEMT), and 1872-1907 (QYHP…KRGV). 2 stretches are compositionally biased toward basic and acidic residues: residues 1620 to 1632 (TVKE…RMGT) and 1659 to 1669 (HRSDDPSREGS). Residues 1716-1726 (PAHKKKARMAR) show a composition bias toward basic residues. Residues 1772–1784 (SLGQASHSDSEMT) are compositionally biased toward polar residues. Residues 1887 to 1899 (CRKEFKENKEPSP) show a composition bias toward basic and acidic residues. Position 2016 is a phosphoserine (serine 2016). The Phorbol-ester/DAG-type zinc finger occupies 2067-2116 (GHMFKATQYSIPTYCEYCSSLIWIMDRASVCKLCKYACHKKCCLKTTAKC). In terms of domain architecture, Rho-GAP spans 2131-2319 (VELSRLTSED…LIVVEQMNKY (189 aa)). The disordered stretch occupies residues 2365 to 2385 (SGKGRLHRGSHPNPSSPVIVR). Serine 2380 is modified (phosphoserine). The stretch at 2408–2444 (TDQQQAAMQQEEKVLTEQIENLQKEKEELTFEMLVLE) forms a coiled coil. A disordered region spans residues 2449 to 2527 (DDEALESEAS…NTTSSHGTRK (79 aa)). Low complexity predominate over residues 2504–2522 (SLDSVSSSVSSCLSNTTSS). Serine 2542 carries the phosphoserine modification. The interval 2552-2614 (PLGQAKSLED…TVDSDCSSTQ (63 aa)) is disordered.

The protein belongs to the TRAFAC class myosin-kinesin ATPase superfamily. Myosin family. Post-translationally, phosphorylated by ALPK1 following monosodium urate monohydrate (MSU)-induced inflammation. As to expression, expressed at high levels in brain, followed by testis and spleen. Expressed at very low levels, in kidney. Detected abundantly in brain and testis and at lower levels in adrenal gland, kidney, lung and spleen (at protein level). In adrenal gland it is mostly found in the medulla but not in the cortex. In brain, it is found in the cerebellum and the CA2-CA3 regions of the hippocampus.

The protein resides in the membrane. It localises to the cytoplasm. It is found in the synapse. Its subcellular location is the cell projection. The protein localises to the growth cone. In terms of biological role, myosins are actin-based motor molecules with ATPase activity. Unconventional myosins serve in intracellular movements. Regulates Rho by stimulating it's GTPase activity in neurons. Required for the regulation of neurite branching and motor neuron axon guidance. This chain is Unconventional myosin-IXa (Myo9a), found in Rattus norvegicus (Rat).